The following is a 583-amino-acid chain: L-arabonate dehydratase (583 aa).

[4Fe-4S] cluster-binding residues include C56, C124, and C197.

This sequence belongs to the IlvD/Edd family. In terms of assembly, homodimer. Requires [4Fe-4S] cluster as cofactor.

It catalyses the reaction L-arabinonate = 2-dehydro-3-deoxy-L-arabinonate + H2O. With respect to regulation, activity is enhanced by Mg(2+), being optimal with a concentration of 1-10 mM Mg(2+). In terms of biological role, catalyzes the dehydration of L-arabonate to L-2-keto-3-deoxyarabonate (L-KDA). Is involved in a degradation pathway of L-arabinose that allows A.brasilense to grow on L-arabinose as a sole carbon source. To a lesser extent, can also use D-xylonate as substrate, but not D-galactonate, D-arabonate, and D-gluconate. This chain is L-arabonate dehydratase (araC), found in Azospirillum brasilense.